We begin with the raw amino-acid sequence, 182 residues long: CASP-like protein 5A1 (182 aa).

Topologically, residues 1 to 47 (MEMASHPAVHPVALPPPYQAVGPPAPPAVRINDFPGSPGTLMGLALR) are cytoplasmic. A helical transmembrane segment spans residues 48 to 68 (FAQLGFALTALCIMVSIVGFS). Residues 69–72 (SVTA) lie on the Extracellular side of the membrane. The chain crosses the membrane as a helical span at residues 73 to 93 (FCFLVAAMVLQCIWSLCLGVL). The Cytoplasmic portion of the chain corresponds to 94 to 117 (DCYALLTKRSLRNSLILSFFVVGD). Residues 118 to 138 (WITSTMTFAGACAAAGITVLI) traverse the membrane as a helical segment. The Extracellular portion of the chain corresponds to 139-158 (DNDLNQCGPNHCNRFEAAAA). The helical transmembrane segment at 159-179 (MAFMSWVITTISFFLSFWILV) threads the bilayer. Residues 180-182 (TCR) are Cytoplasmic-facing.

This sequence belongs to the Casparian strip membrane proteins (CASP) family. As to quaternary structure, homodimer and heterodimers.

The protein resides in the cell membrane. The protein is CASP-like protein 5A1 of Physcomitrium patens (Spreading-leaved earth moss).